The chain runs to 131 residues: Conotoxin Cal8.1 (131 aa).

The N-terminal stretch at 1–19 is a signal peptide; sequence MKLLLTLLLGSALMCITLA. Residues 20–38 constitute a propeptide that is removed on maturation; the sequence is DECGLGTHRPVKEVIDNVR.

Post-translationally, contains 4 disulfide bonds. Expressed by the venom duct.

It is found in the secreted. Its function is as follows. Probable neurotoxin with unknown target. Possibly targets ion channels. The protein is Conotoxin Cal8.1 of Californiconus californicus (California cone).